Reading from the N-terminus, the 258-residue chain is Aspartate/glutamate leucyltransferase (258 aa).

This sequence belongs to the R-transferase family. Bpt subfamily.

The protein localises to the cytoplasm. The catalysed reaction is N-terminal L-glutamyl-[protein] + L-leucyl-tRNA(Leu) = N-terminal L-leucyl-L-glutamyl-[protein] + tRNA(Leu) + H(+). It catalyses the reaction N-terminal L-aspartyl-[protein] + L-leucyl-tRNA(Leu) = N-terminal L-leucyl-L-aspartyl-[protein] + tRNA(Leu) + H(+). Its function is as follows. Functions in the N-end rule pathway of protein degradation where it conjugates Leu from its aminoacyl-tRNA to the N-termini of proteins containing an N-terminal aspartate or glutamate. The sequence is that of Aspartate/glutamate leucyltransferase from Bradyrhizobium sp. (strain BTAi1 / ATCC BAA-1182).